The sequence spans 148 residues: UPF0735 ACT domain-containing protein Dred_1164 (148 aa).

The region spanning 72–147 (TLALLMEHQP…GVREVRLVGQ (76 aa)) is the ACT domain.

It belongs to the UPF0735 family.

The polypeptide is UPF0735 ACT domain-containing protein Dred_1164 (Desulforamulus reducens (strain ATCC BAA-1160 / DSM 100696 / MI-1) (Desulfotomaculum reducens)).